Reading from the N-terminus, the 335-residue chain is Methyltransferase pgmE (335 aa).

This sequence belongs to the methyltransferase superfamily.

The protein operates within pigment biosynthesis. It participates in secondary metabolite biosynthesis. Functionally, methyltransferase; part of the gene cluster that mediates the biosynthesis of pleosporalin A, ascomycone A, as well as a third cryptic naphthoquinone derived pigment, all responsible for the coloration of conidia. Essential for the production of pleosporalin A, but not the 2 other final products. The pathway begins with the biosynthesis of the cyclized heptaketide 3-acetonyl-1,6,8-trihydroxy-2-naphthaldehyde by the NR-PKS pgmA. The C-6 hydroxyl group is further methylated by the O-methyltransferase pgmB to yield fusarubinaldehyde which is in turn oxidized by the cytochrome P450 monooxygenase pgmC at C-9. The C-1 hydroxyl group is then methylated spontaneously. Although pgmE, pgmD and pgmH are essential for the production of pleosporalin A, it is not the case for the 2 other final products and it remains difficult to assign a specific function to each enzyme. PgmF and pgmG seem not to be involved in pigment biosynthesis although they were regulated by the cluster-specific transcription factor pgmR. In Aspergillus terreus (strain NIH 2624 / FGSC A1156), this protein is Methyltransferase pgmE.